The sequence spans 73 residues: Putative antitoxin VapB38 (73 aa).

Probable antitoxin component of a type II toxin-antitoxin (TA) system. Its putative cognate toxin is VapC38. The sequence is that of Putative antitoxin VapB38 (vapB38) from Mycobacterium tuberculosis (strain ATCC 25618 / H37Rv).